Here is a 516-residue protein sequence, read N- to C-terminus: Glycerol-3-phosphate dehydrogenase 1 (516 aa).

Residue 28–56 (DVIVIGGGITGVGIALDAATRGLTVALVE) coordinates FAD.

Belongs to the FAD-dependent glycerol-3-phosphate dehydrogenase family. The cofactor is FAD.

Its subcellular location is the cytoplasm. The catalysed reaction is a quinone + sn-glycerol 3-phosphate = dihydroxyacetone phosphate + a quinol. This is Glycerol-3-phosphate dehydrogenase 1 (glpD1) from Mycobacterium bovis (strain ATCC BAA-935 / AF2122/97).